The following is a 467-amino-acid chain: UDP-N-acetylmuramate--L-alanine ligase (467 aa).

114–120 provides a ligand contact to ATP; the sequence is GTHGKTT.

Belongs to the MurCDEF family.

The protein resides in the cytoplasm. The catalysed reaction is UDP-N-acetyl-alpha-D-muramate + L-alanine + ATP = UDP-N-acetyl-alpha-D-muramoyl-L-alanine + ADP + phosphate + H(+). The protein operates within cell wall biogenesis; peptidoglycan biosynthesis. In terms of biological role, cell wall formation. This chain is UDP-N-acetylmuramate--L-alanine ligase, found in Bradyrhizobium sp. (strain ORS 278).